A 264-amino-acid polypeptide reads, in one-letter code: 4-hydroxy-tetrahydrodipicolinate reductase (264 aa).

9-14 serves as a coordination point for NAD(+); sequence GCSGRM. Arg36 is a binding site for NADP(+). Residues 100–102 and 121–124 each bind NAD(+); these read GTT and SANM. His154 serves as the catalytic Proton donor/acceptor. Residue His155 coordinates (S)-2,3,4,5-tetrahydrodipicolinate. Lys158 serves as the catalytic Proton donor. 164-165 serves as a coordination point for (S)-2,3,4,5-tetrahydrodipicolinate; that stretch reads GT.

The protein belongs to the DapB family.

The protein localises to the cytoplasm. It carries out the reaction (S)-2,3,4,5-tetrahydrodipicolinate + NAD(+) + H2O = (2S,4S)-4-hydroxy-2,3,4,5-tetrahydrodipicolinate + NADH + H(+). The enzyme catalyses (S)-2,3,4,5-tetrahydrodipicolinate + NADP(+) + H2O = (2S,4S)-4-hydroxy-2,3,4,5-tetrahydrodipicolinate + NADPH + H(+). It participates in amino-acid biosynthesis; L-lysine biosynthesis via DAP pathway; (S)-tetrahydrodipicolinate from L-aspartate: step 4/4. In terms of biological role, catalyzes the conversion of 4-hydroxy-tetrahydrodipicolinate (HTPA) to tetrahydrodipicolinate. This is 4-hydroxy-tetrahydrodipicolinate reductase from Wolbachia sp. subsp. Brugia malayi (strain TRS).